Reading from the N-terminus, the 325-residue chain is Glutarate 2-hydroxylase (325 aa).

Residues His160, Asp162, and His292 each coordinate Fe cation.

Belongs to the glutarate hydroxylase family. As to quaternary structure, homotetramer. Requires Fe(2+) as cofactor.

It carries out the reaction glutarate + 2-oxoglutarate + O2 = (S)-2-hydroxyglutarate + succinate + CO2. Its pathway is amino-acid degradation. Acts as an alpha-ketoglutarate-dependent dioxygenase catalyzing hydroxylation of glutarate (GA) to L-2-hydroxyglutarate (L2HG). Functions in a L-lysine degradation pathway that proceeds via cadaverine, glutarate and L-2-hydroxyglutarate. This Escherichia coli (strain UTI89 / UPEC) protein is Glutarate 2-hydroxylase.